Consider the following 312-residue polypeptide: Acetylglutamate kinase (312 aa).

Residues G76–G77, R98, and N199 contribute to the substrate site.

This sequence belongs to the acetylglutamate kinase family. ArgB subfamily.

It localises to the cytoplasm. It carries out the reaction N-acetyl-L-glutamate + ATP = N-acetyl-L-glutamyl 5-phosphate + ADP. Its pathway is amino-acid biosynthesis; L-arginine biosynthesis; N(2)-acetyl-L-ornithine from L-glutamate: step 2/4. Functionally, catalyzes the ATP-dependent phosphorylation of N-acetyl-L-glutamate. This chain is Acetylglutamate kinase, found in Beutenbergia cavernae (strain ATCC BAA-8 / DSM 12333 / CCUG 43141 / JCM 11478 / NBRC 16432 / NCIMB 13614 / HKI 0122).